A 294-amino-acid chain; its full sequence is Probable 2-(5''-triphosphoribosyl)-3'-dephosphocoenzyme-A synthase (294 aa).

This sequence belongs to the CitG/MdcB family.

It carries out the reaction 3'-dephospho-CoA + ATP = 2'-(5''-triphospho-alpha-D-ribosyl)-3'-dephospho-CoA + adenine. This chain is Probable 2-(5''-triphosphoribosyl)-3'-dephosphocoenzyme-A synthase, found in Streptococcus equi subsp. equi (strain 4047).